The chain runs to 347 residues: Fc receptor-like A (347 aa).

Residues 1–27 form the signal peptide; the sequence is MKLSCMLIEWALYVCPAVLLATQMSLA. Ig-like C2-type domains are found at residues 77 to 166 and 179 to 257; these read PFHL…ETAS and PVLK…RQIS. Cystine bridges form between Cys-106-Cys-150 and Cys-199-Cys-247. Residues 272 to 296 form a disordered region; sequence KPATPETPPPAKAPGPLPLLPTPSD. Positions 276–292 are enriched in pro residues; sequence PETPPPAKAPGPLPLLP.

Monomer or homodimer; disulfide-linked.

It is found in the cytoplasm. May be implicated in B-cell differentiation and lymphomagenesis. The protein is Fc receptor-like A (Fcrla) of Rattus norvegicus (Rat).